A 784-amino-acid polypeptide reads, in one-letter code: ATP-dependent 6-phosphofructokinase, platelet type (784 aa).

N-acetylmethionine is present on M1. The segment at 1–399 (MDADDSRAPK…NLNTYKRLAI (399 aa)) is N-terminal catalytic PFK domain 1. Phosphoserine is present on residues S6, S12, and S21. ATP contacts are provided by residues G34, 97–98 (RC), and 127–130 (GDGS). D128 serves as a coordination point for Mg(2+). S142 is modified (phosphoserine). Residues 173–175 (SID), R210, 217–219 (MGR), E273, R301, and 307–310 (HVQR) each bind substrate. D175 functions as the Proton acceptor in the catalytic mechanism. S386 carries the phosphoserine modification. N6-acetyllysine is present on K395. An interdomain linker region spans residues 400-411 (KLPDDQIPKTNC). Positions 412–784 (NVAVINVGAP…QLEHVQPWSV (373 aa)) are C-terminal regulatory PFK domain 2. R481 lines the beta-D-fructose 2,6-bisphosphate pocket. An N6-acetyllysine modification is found at K486. Beta-D-fructose 2,6-bisphosphate-binding positions include 538–542 (TVSNN), R576, 583–585 (MGG), and E639. S540 is a glycosylation site (O-linked (GlcNAc) serine). Phosphotyrosine is present on Y651. Beta-D-fructose 2,6-bisphosphate-binding positions include R665 and 671-674 (HMQQ). Residue K688 is modified to N6-acetyllysine. R744 contacts beta-D-fructose 2,6-bisphosphate. S783 is subject to Phosphoserine.

This sequence belongs to the phosphofructokinase type A (PFKA) family. ATP-dependent PFK group I subfamily. Eukaryotic two domain clade 'E' sub-subfamily. In terms of assembly, homo- and heterotetramers. Phosphofructokinase (PFK) enzyme functions as a tetramer composed of different combinations of 3 types of subunits, called PFKM (where M stands for Muscle), PFKL (Liver) and PFKP (Platelet). The composition of the PFK tetramer differs according to the tissue type it is present in. In muscles, it is composed of 4 PFKM subunits (also called M4). In the liver, the predominant form is a tetramer of PFKL subunits (L4). In erythrocytes, both PFKM and PFKL subunits randomly tetramerize to form M4, L4 and other combinations (ML3, M2L2, M3L). In platelets, brain and fibroblasts, PFK contains a higher proportion of PFKP subunits. The kinetic and regulatory properties of the tetrameric enzyme are dependent on the subunit composition, hence can vary across tissues. Interacts with ATG4B; promoting phosphorylation of ATG4B. Requires Mg(2+) as cofactor. Phosphorylation at Ser-386 promotes interaction with ATG4B. Post-translationally, glcNAcylation decreases enzyme activity.

It is found in the cytoplasm. It catalyses the reaction beta-D-fructose 6-phosphate + ATP = beta-D-fructose 1,6-bisphosphate + ADP + H(+). The protein operates within carbohydrate degradation; glycolysis; D-glyceraldehyde 3-phosphate and glycerone phosphate from D-glucose: step 3/4. Allosterically activated by ADP, AMP, or fructose 2,6-bisphosphate, and allosterically inhibited by ATP or citrate. Catalyzes the phosphorylation of D-fructose 6-phosphate to fructose 1,6-bisphosphate by ATP, the first committing step of glycolysis. In Homo sapiens (Human), this protein is ATP-dependent 6-phosphofructokinase, platelet type (PFKP).